The following is a 68-amino-acid chain: Large ribosomal subunit protein bL32 (68 aa).

This sequence belongs to the bacterial ribosomal protein bL32 family.

This chain is Large ribosomal subunit protein bL32, found in Aster yellows witches'-broom phytoplasma (strain AYWB).